The chain runs to 82 residues: EMBRYO SURROUNDING FACTOR 1.2 (82 aa).

Residues 1–23 form the signal peptide; sequence MKSQTVLISIFIFSFFALHQCMQ. 4 cysteine pairs are disulfide-bonded: C40-C56, C45-C77, C54-C71, and C57-C64.

It belongs to the MEG family. As to expression, expressed exclusively in ovule embryo sacs and in early developing endosperms.

Its function is as follows. Maternally-contributed central cell peptide regulating suspensor development and correct auxin distribution in early developing embryos. The chain is EMBRYO SURROUNDING FACTOR 1.2 (ESF1.2) from Arabidopsis thaliana (Mouse-ear cress).